A 471-amino-acid chain; its full sequence is ATP synthase subunit beta 1 (471 aa).

157 to 164 (GGAGVGKT) is an ATP binding site.

Belongs to the ATPase alpha/beta chains family. As to quaternary structure, F-type ATPases have 2 components, CF(1) - the catalytic core - and CF(0) - the membrane proton channel. CF(1) has five subunits: alpha(3), beta(3), gamma(1), delta(1), epsilon(1). CF(0) has three main subunits: a(1), b(2) and c(9-12). The alpha and beta chains form an alternating ring which encloses part of the gamma chain. CF(1) is attached to CF(0) by a central stalk formed by the gamma and epsilon chains, while a peripheral stalk is formed by the delta and b chains.

It is found in the cell inner membrane. The catalysed reaction is ATP + H2O + 4 H(+)(in) = ADP + phosphate + 5 H(+)(out). Produces ATP from ADP in the presence of a proton gradient across the membrane. The catalytic sites are hosted primarily by the beta subunits. This is ATP synthase subunit beta 1 from Pelobacter propionicus (strain DSM 2379 / NBRC 103807 / OttBd1).